We begin with the raw amino-acid sequence, 433 residues long: Phosphomethylpyrimidine synthase (433 aa).

Substrate contacts are provided by residues Asn66, Met94, Tyr123, His162, Ser184–Gly186, Asp225–Arg228, and Glu264. His268 contributes to the Zn(2+) binding site. Tyr291 contributes to the substrate binding site. His332 is a binding site for Zn(2+). Cys408, Cys411, and Cys415 together coordinate [4Fe-4S] cluster.

This sequence belongs to the ThiC family. [4Fe-4S] cluster serves as cofactor.

The catalysed reaction is 5-amino-1-(5-phospho-beta-D-ribosyl)imidazole + S-adenosyl-L-methionine = 4-amino-2-methyl-5-(phosphooxymethyl)pyrimidine + CO + 5'-deoxyadenosine + formate + L-methionine + 3 H(+). The protein operates within cofactor biosynthesis; thiamine diphosphate biosynthesis. In terms of biological role, catalyzes the synthesis of the hydroxymethylpyrimidine phosphate (HMP-P) moiety of thiamine from aminoimidazole ribotide (AIR) in a radical S-adenosyl-L-methionine (SAM)-dependent reaction. The chain is Phosphomethylpyrimidine synthase from Saccharolobus islandicus (strain M.14.25 / Kamchatka #1) (Sulfolobus islandicus).